A 203-amino-acid chain; its full sequence is Thymidylate kinase (203 aa).

An ATP-binding site is contributed by Gly7 to Thr14.

It belongs to the thymidylate kinase family.

The catalysed reaction is dTMP + ATP = dTDP + ADP. Functionally, phosphorylation of dTMP to form dTDP in both de novo and salvage pathways of dTTP synthesis. The polypeptide is Thymidylate kinase (Chlamydia trachomatis serovar L2 (strain ATCC VR-902B / DSM 19102 / 434/Bu)).